We begin with the raw amino-acid sequence, 171 residues long: uncharacterized protein (171 aa).

The tract at residues 56–83 (TVGVNKNAKNGPTQSQTRSGSAGAQARM) is disordered. The segment covering 57–77 (VGVNKNAKNGPTQSQTRSGSA) has biased composition (polar residues). The J domain maps to 113–170 (KAFETLGLGASATTADIKAAYKDLVKKHHPDANGGDRGSEERFRAVIQAYQLLKQAGF).

This is an uncharacterized protein from Sinorhizobium sp.